We begin with the raw amino-acid sequence, 82 residues long: Small ribosomal subunit protein bS20 (82 aa).

Belongs to the bacterial ribosomal protein bS20 family.

In terms of biological role, binds directly to 16S ribosomal RNA. This is Small ribosomal subunit protein bS20 from Streptococcus suis (strain 98HAH33).